Reading from the N-terminus, the 248-residue chain is MSLFPSLPLLLLSMVAASYSETVTCEDAQKTCPAVIACSSPGINGFPGKDGRDGTKGEKGEPGQGLRGLQGPPGKLGPPGNPGPSGSPGPKGQKGDPGKSPDGDSSLAASERKALQTEMARIKKWLTFSLGKQVGNKFFLTNGEIMTFEKVKALCVKFQASVATPRNAAENGAIRNLIKEEAFLGITDEKTEGQFVDLTGNRLTYTNWNEGEPNNAGSDEDCVLLLKNGQWNDVPCSTSHLAVCEFPI.

Residues 1-20 (MSLFPSLPLLLLSMVAASYS) form the signal peptide. A Collagen-like domain is found at 42-99 (GINGFPGKDGRDGTKGEKGEPGQGLRGLQGPPGKLGPPGNPGPSGSPGPKGQKGDPGK). A disordered region spans residues 43–113 (INGFPGKDGR…DSSLAASERK (71 aa)). P47 bears the 4-hydroxyproline mark. The span at 49-61 (KDGRDGTKGEKGE) shows a compositional bias: basic and acidic residues. A 4-hydroxyproline mark is found at P73, P79, P82, and P88. Pro residues predominate over residues 75–87 (KLGPPGNPGPSGS). Positions 93–102 (QKGDPGKSPD) are enriched in basic and acidic residues. A coiled-coil region spans residues 112 to 130 (RKALQTEMARIKKWLTFSL). A C-type lectin domain is found at 134–245 (VGNKFFLTNG…CSTSHLAVCE (112 aa)). 2 cysteine pairs are disulfide-bonded: C155–C244 and C222–C236.

As to quaternary structure, oligomeric complex of 3 or more homotrimers. Interacts with MASP1 and MASP2. Interacts with MEP1A and MEP1B and may inhibit their catalytic activity. In terms of processing, hydroxylation on proline residues within the sequence motif, GXPG, is most likely to be 4-hydroxy as this fits the requirement for 4-hydroxylation in vertebrates.

It is found in the secreted. Functionally, calcium-dependent lectin involved in innate immune defense. Binds mannose, fucose and N-acetylglucosamine on different microorganisms and activates the lectin complement pathway. Binds to late apoptotic cells, as well as to apoptotic blebs and to necrotic cells, but not to early apoptotic cells, facilitating their uptake by macrophages. In Gorilla gorilla gorilla (Western lowland gorilla), this protein is Mannose-binding protein C (MBL2).